Here is a 591-residue protein sequence, read N- to C-terminus: F420 non-reducing hydrogenase II large subunit (591 aa).

A Mg(2+)-binding site is contributed by glutamate 42. Cysteine 61, cysteine 64, cysteine 569, and cysteine 572 together coordinate Ni(2+). Cysteine 64 lines the Fe cation pocket. Cysteine 572 lines the Fe cation pocket. Histidine 575 is a binding site for Mg(2+).

Belongs to the [NiFe]/[NiFeSe] hydrogenase large subunit family. Composed of a large subunit (VhtA), a small subunit (VhtG) and a cytochrome subunit (VhtC). The cofactor is Ni(2+). It depends on Fe cation as a cofactor.

The protein resides in the cell membrane. It carries out the reaction methanophenazine + H2 = dihydromethanophenazine. Part of the F420 non-reducing hydrogenase II complex that catalyzes the reduction of methanophenazine to dihydromethanophenazine. The polypeptide is F420 non-reducing hydrogenase II large subunit (Methanosarcina mazei (strain ATCC BAA-159 / DSM 3647 / Goe1 / Go1 / JCM 11833 / OCM 88) (Methanosarcina frisia)).